Reading from the N-terminus, the 140-residue chain is Large-conductance mechanosensitive channel (140 aa).

The next 2 membrane-spanning stretches (helical) occupy residues 9–29 and 86–106; these read AFAL…GAAF and GSFL…FLMV.

Belongs to the MscL family. As to quaternary structure, homopentamer.

The protein localises to the cell inner membrane. Channel that opens in response to stretch forces in the membrane lipid bilayer. May participate in the regulation of osmotic pressure changes within the cell. In Anaeromyxobacter dehalogenans (strain 2CP-1 / ATCC BAA-258), this protein is Large-conductance mechanosensitive channel.